A 592-amino-acid chain; its full sequence is A-type ATP synthase subunit A (592 aa).

233-240 (GPFGSGKT) is a binding site for ATP.

The protein belongs to the ATPase alpha/beta chains family. As to quaternary structure, has multiple subunits with at least A(3), B(3), C, D, E, F, H, I and proteolipid K(x).

The protein resides in the cell membrane. The catalysed reaction is ATP + H2O + 4 H(+)(in) = ADP + phosphate + 5 H(+)(out). Its function is as follows. Component of the A-type ATP synthase that produces ATP from ADP in the presence of a proton gradient across the membrane. The A chain is the catalytic subunit. In Saccharolobus islandicus (strain M.16.27) (Sulfolobus islandicus), this protein is A-type ATP synthase subunit A.